The primary structure comprises 332 residues: Ribosomal RNA small subunit methyltransferase C (332 aa).

It belongs to the methyltransferase superfamily. RsmC family. In terms of assembly, monomer.

It localises to the cytoplasm. It catalyses the reaction guanosine(1207) in 16S rRNA + S-adenosyl-L-methionine = N(2)-methylguanosine(1207) in 16S rRNA + S-adenosyl-L-homocysteine + H(+). Functionally, specifically methylates the guanine in position 1207 of 16S rRNA in the 30S particle. This Pseudomonas syringae pv. syringae (strain B728a) protein is Ribosomal RNA small subunit methyltransferase C.